A 282-amino-acid chain; its full sequence is Elongation factor Ts (282 aa).

Residues 80-83 are involved in Mg(2+) ion dislocation from EF-Tu; that stretch reads TDFV.

Belongs to the EF-Ts family.

Its subcellular location is the cytoplasm. Its function is as follows. Associates with the EF-Tu.GDP complex and induces the exchange of GDP to GTP. It remains bound to the aminoacyl-tRNA.EF-Tu.GTP complex up to the GTP hydrolysis stage on the ribosome. The polypeptide is Elongation factor Ts (Chlamydia trachomatis serovar L2 (strain ATCC VR-902B / DSM 19102 / 434/Bu)).